The sequence spans 363 residues: Phosphoserine aminotransferase (363 aa).

Arg-42 contributes to the L-glutamate binding site. Residues 76 to 77, Trp-102, Thr-156, Asp-175, and Gln-198 contribute to the pyridoxal 5'-phosphate site; that span reads GR. An N6-(pyridoxal phosphate)lysine modification is found at Lys-199. 240–241 serves as a coordination point for pyridoxal 5'-phosphate; it reads NT.

Belongs to the class-V pyridoxal-phosphate-dependent aminotransferase family. SerC subfamily. As to quaternary structure, homodimer. The cofactor is pyridoxal 5'-phosphate.

The protein resides in the cytoplasm. It catalyses the reaction O-phospho-L-serine + 2-oxoglutarate = 3-phosphooxypyruvate + L-glutamate. The enzyme catalyses 4-(phosphooxy)-L-threonine + 2-oxoglutarate = (R)-3-hydroxy-2-oxo-4-phosphooxybutanoate + L-glutamate. It functions in the pathway amino-acid biosynthesis; L-serine biosynthesis; L-serine from 3-phospho-D-glycerate: step 2/3. Its pathway is cofactor biosynthesis; pyridoxine 5'-phosphate biosynthesis; pyridoxine 5'-phosphate from D-erythrose 4-phosphate: step 3/5. Its function is as follows. Catalyzes the reversible conversion of 3-phosphohydroxypyruvate to phosphoserine and of 3-hydroxy-2-oxo-4-phosphonooxybutanoate to phosphohydroxythreonine. The protein is Phosphoserine aminotransferase of Shewanella baltica (strain OS223).